A 349-amino-acid polypeptide reads, in one-letter code: 3'-5' exoribonuclease 1 (349 aa).

Basic and acidic residues-rich tracts occupy residues 1–10 (MEDPQSKEPA) and 22–35 (PRPE…RPSP). The interval 1–48 (MEDPQSKEPAGEAVALALLESPRPEGGEEPPRPSPEETQQCKFDGQET) is disordered. Residues S59 and S62 each carry the phosphoserine modification. The region spanning 76–110 (INRMSKEELRAKLSEFKLETRGVKDVLKKRLKNYY) is the SAP domain. One can recognise an Exonuclease domain in the interval 130–306 (ICIIDFEATC…DDSKNIARIA (177 aa)). 2 residues coordinate Mg(2+): D134 and E136. E136 functions as the Proton acceptor in the catalytic mechanism. Positions 136 and 137 each coordinate AMP. D234 provides a ligand contact to Mg(2+). The Proton acceptor role is filled by H293. H293 is a binding site for AMP. A Mg(2+)-binding site is contributed by D298.

As to quaternary structure, identified in a histone pre-mRNA complex, at least composed of ERI1, LSM11, SLBP, SNRPB, SYNCRIP and YBX1. Interacts in a cooperative manner with SLBP to the mature 3'-end of histone mRNAs. Binds to 40S and 60S ribosomal subunits and to 80S assembled ribosomes. Found in a ternary complex with SLBP and the stem-loop structure of the 3'-end of histone mRNAs. The cofactor is Mg(2+).

It localises to the cytoplasm. The protein localises to the nucleus. Its subcellular location is the nucleolus. It catalyses the reaction Exonucleolytic cleavage in the 3'- to 5'-direction to yield nucleoside 5'-phosphates.. Although it can bind simultaneously with SLBP to the 3'-end of histone mRNA, the presence of SLBP prevents the exonuclease activity. Its function is as follows. RNA exonuclease that binds to the 3'-end of histone mRNAs and degrades them, suggesting that it plays an essential role in histone mRNA decay after replication. A 2' and 3'-hydroxyl groups at the last nucleotide of the histone 3'-end is required for efficient 3'-end histone mRNA exonuclease activity and degradation of RNA substrates. Also able to degrade the 3'-overhangs of short interfering RNAs (siRNAs) in vitro, suggesting a possible role as regulator of RNA interference (RNAi). Required for binding the 5'-ACCCA-3' sequence present in stem-loop structure. Able to bind other mRNAs. Required for 5.8S rRNA 3'-end processing. Also binds to 5.8s ribosomal RNA. Binds with high affinity to the stem-loop structure of replication-dependent histone pre-mRNAs. In vitro, does not have sequence specificity. In vitro, has weak DNA exonuclease activity. In vitro, shows biphasic kinetics such that there is rapid hydrolysis of the last three unpaired RNA nucleotides in the 39 flanking sequence followed by a much slower cleavage through the stem that occurs over a longer incubation period in the order of hours. ERI1-mediated RNA metabolism plays a key role in chondrogenesis. This chain is 3'-5' exoribonuclease 1, found in Homo sapiens (Human).